Consider the following 1246-residue polypeptide: Superkiller complex protein 2 (1246 aa).

Positions 220–246 are disordered; sequence LGGGDEDENEAVGQPGGPRGDTVSASP. A phosphoserine mark is found at serine 245 and serine 256. Residues 319-475 enclose the Helicase ATP-binding domain; it reads ILHLERHDSV…WIGRLKRRQI (157 aa). Position 332–339 (332–339) interacts with ATP; the sequence is AHTSAGKT. The DEVH box motif lies at 423-426; the sequence is DEVH. The Helicase C-terminal domain maps to 585–755; the sequence is GLTSLDLTTS…LTYTMILNLL (171 aa).

The protein belongs to the helicase family. SKI2 subfamily. Component of the SKI complex which consists of SKIC2, SKIC3 and SKIC8. Interacts with HBS1L isoform 2.

Its subcellular location is the nucleus. It is found in the cytoplasm. It carries out the reaction ATP + H2O = ADP + phosphate + H(+). Its function is as follows. Helicase component of the SKI complex, a multiprotein complex that assists the RNA-degrading exosome during the mRNA decay and quality-control pathways. The SKI complex catalyzes mRNA extraction from 80S ribosomal complexes in the 3'-5' direction and channels mRNA to the cytosolic exosome for degradation. SKI-mediated extraction of mRNA from stalled ribosomes allow binding of the Pelota-HBS1L complex and subsequent ribosome disassembly by ABCE1 for ribosome recycling. In the nucleus, the SKI complex associates with transcriptionally active genes in a manner dependent on PAF1 complex (PAF1C). This chain is Superkiller complex protein 2, found in Homo sapiens (Human).